The sequence spans 424 residues: uncharacterized protein (424 aa).

The protein belongs to the serpin family.

This is an uncharacterized protein from Methanosarcina acetivorans (strain ATCC 35395 / DSM 2834 / JCM 12185 / C2A).